The primary structure comprises 350 residues: Phenylalanine--tRNA ligase alpha subunit (350 aa).

Glu-271 serves as a coordination point for Mg(2+).

The protein belongs to the class-II aminoacyl-tRNA synthetase family. Phe-tRNA synthetase alpha subunit type 1 subfamily. As to quaternary structure, tetramer of two alpha and two beta subunits. The cofactor is Mg(2+).

The protein localises to the cytoplasm. The enzyme catalyses tRNA(Phe) + L-phenylalanine + ATP = L-phenylalanyl-tRNA(Phe) + AMP + diphosphate + H(+). This Paracidovorax citrulli (strain AAC00-1) (Acidovorax citrulli) protein is Phenylalanine--tRNA ligase alpha subunit.